The primary structure comprises 483 residues: Matrix metalloproteinase-20 (483 aa).

A signal peptide spans 1-22 (MKVLPASGLAVFLIMALKFSTA). Positions 23-107 (APSLVAASPR…PRCGVPDVAN (85 aa)) are excised as a propeptide. The Cysteine switch motif lies at 98–105 (PRCGVPDV). Cys-100 contributes to the Zn(2+) binding site. Positions 164, 165, and 166 each coordinate Ca(2+). Zn(2+) contacts are provided by His-176 and Asp-178. Positions 183, 184, 186, and 188 each coordinate Ca(2+). A Zn(2+)-binding site is contributed by His-191. Ca(2+)-binding residues include Glu-197, Gly-198, Gly-200, and Asp-202. Position 204 (His-204) interacts with Zn(2+). The Ca(2+) site is built by Asp-206 and Glu-209. His-226 serves as a coordination point for Zn(2+). Glu-227 is an active-site residue. Residues His-230 and His-236 each coordinate Zn(2+). Hemopexin repeat units follow at residues 293–343 (PDLC…FPQL), 344–389 (MSNV…GFPR), 391–439 (VQQI…FSGV), and 440–483 (NGQI…WIGC). Cysteines 296 and 483 form a disulfide.

This sequence belongs to the peptidase M10A family. It depends on Zn(2+) as a cofactor. Ca(2+) serves as cofactor. Autoactivates at least at the 107-Asn-|-Tyr-108 site. In terms of tissue distribution, expressed specifically in the enamel organ.

Its subcellular location is the secreted. It is found in the extracellular space. The protein localises to the extracellular matrix. Functionally, degrades amelogenin, the major protein component of the enamel matrix and two of the macromolecules characterizing the cartilage extracellular matrix: aggrecan and the cartilage oligomeric matrix protein (COMP). May play a central role in tooth enamel formation. Cleaves aggrecan at the '360-Asn-|-Phe-361' site. This is Matrix metalloproteinase-20 (MMP20) from Homo sapiens (Human).